The chain runs to 430 residues: Tyrosine--tRNA ligase (430 aa).

Tyr32 is an L-tyrosine binding site. Positions 37-46 (PTADSLHIGH) match the 'HIGH' region motif. 2 residues coordinate L-tyrosine: Tyr172 and Gln176. Residues 232–236 (KFGKT) carry the 'KMSKS' region motif. Lys235 is a binding site for ATP. Residues 362-429 (VKAVDLFVDN…GKKNYYLIIA (68 aa)) enclose the S4 RNA-binding domain.

It belongs to the class-I aminoacyl-tRNA synthetase family. TyrS type 1 subfamily. As to quaternary structure, homodimer.

Its subcellular location is the cytoplasm. It carries out the reaction tRNA(Tyr) + L-tyrosine + ATP = L-tyrosyl-tRNA(Tyr) + AMP + diphosphate + H(+). Functionally, catalyzes the attachment of tyrosine to tRNA(Tyr) in a two-step reaction: tyrosine is first activated by ATP to form Tyr-AMP and then transferred to the acceptor end of tRNA(Tyr). This chain is Tyrosine--tRNA ligase, found in Bacteroides fragilis (strain YCH46).